Reading from the N-terminus, the 253-residue chain is Chloride intracellular channel protein 4 (253 aa).

Alanine 2 is subject to N-acetylalanine. The tract at residues 2–101 (ALSMPLNGLK…EEFLEEVLCP (100 aa)) is required for insertion into the membrane. Serine 4 carries the post-translational modification Phosphoserine. Position 24 is an N6-acetyllysine (lysine 24). The G-site signature appears at 35 to 38 (CPFS). The helical transmembrane segment at 37–57 (FSQRLFMILWLKGVVFSVTTV) threads the bilayer. The 164-residue stretch at 81–244 (NSEVKTDVNK…PSDKEVEIAY (164 aa)) folds into the GST C-terminal domain. At lysine 130 the chain carries N6-acetyllysine. 3 positions are modified to phosphoserine: serine 132, serine 167, and serine 236. Phosphotyrosine is present on tyrosine 244.

The protein belongs to the chloride channel CLIC family. Monomer. Interacts with HRH3. As to expression, detected in brain, in cell bodies and dendrites of Purkinje cells in cerebellar neurons (at protein level). Expressed neonatal and adult cardiomyocytes (at protein level). Marked expression was found in hippocampus and cerebellum, and in many other tissues.

It is found in the cytoplasm. The protein resides in the cytoskeleton. The protein localises to the microtubule organizing center. Its subcellular location is the centrosome. It localises to the cytoplasmic vesicle membrane. It is found in the nucleus. The protein resides in the cell membrane. The protein localises to the mitochondrion. Its subcellular location is the cell junction. It localises to the endoplasmic reticulum membrane. It catalyses the reaction chloride(in) = chloride(out). The catalysed reaction is thiocyanate(in) = thiocyanate(out). The enzyme catalyses nitrate(in) = nitrate(out). It carries out the reaction iodide(out) = iodide(in). It catalyses the reaction bromide(in) = bromide(out). The catalysed reaction is fluoride(in) = fluoride(out). The enzyme catalyses choline(out) = choline(in). Its activity is regulated as follows. Channel activity is redox- and pH-regulated. Anion vs cation selectivity is enhanced when fully oxidized. Functionally, in the soluble state, catalyzes glutaredoxin-like thiol disulfide exchange reactions with reduced glutathione as electron donor. Can insert into membranes and form voltage-dependent multi-ion conductive channels. Membrane insertion seems to be redox-regulated and may occur only under oxidizing conditions. Has alternate cellular functions like a potential role in angiogenesis or in maintaining apical-basolateral membrane polarity during mitosis and cytokinesis. Could also promote endothelial cell proliferation and regulate endothelial morphogenesis (tubulogenesis). Promotes cell-surface expression of HRH3. The polypeptide is Chloride intracellular channel protein 4 (Clic4) (Rattus norvegicus (Rat)).